Reading from the N-terminus, the 137-residue chain is Large ribosomal subunit protein uL22 (137 aa).

Belongs to the universal ribosomal protein uL22 family. Part of the 50S ribosomal subunit.

Functionally, this protein binds specifically to 23S rRNA; its binding is stimulated by other ribosomal proteins, e.g. L4, L17, and L20. It is important during the early stages of 50S assembly. It makes multiple contacts with different domains of the 23S rRNA in the assembled 50S subunit and ribosome. In terms of biological role, the globular domain of the protein is located near the polypeptide exit tunnel on the outside of the subunit, while an extended beta-hairpin is found that lines the wall of the exit tunnel in the center of the 70S ribosome. The polypeptide is Large ribosomal subunit protein uL22 (Flavobacterium johnsoniae (strain ATCC 17061 / DSM 2064 / JCM 8514 / BCRC 14874 / CCUG 350202 / NBRC 14942 / NCIMB 11054 / UW101) (Cytophaga johnsonae)).